The following is a 377-amino-acid chain: N5-carboxyaminoimidazole ribonucleotide synthase (377 aa).

Residues arginine 93, lysine 133, 138 to 144, 175 to 178, glutamate 183, histidine 206, and 257 to 258 contribute to the ATP site; these read GYDGRGQ, EEFV, and NE. An ATP-grasp domain is found at 97–287; sequence KTLLDHAGVR…QFENHLRAVC (191 aa).

This sequence belongs to the PurK/PurT family. As to quaternary structure, homodimer.

The catalysed reaction is 5-amino-1-(5-phospho-beta-D-ribosyl)imidazole + hydrogencarbonate + ATP = 5-carboxyamino-1-(5-phospho-D-ribosyl)imidazole + ADP + phosphate + 2 H(+). It functions in the pathway purine metabolism; IMP biosynthesis via de novo pathway; 5-amino-1-(5-phospho-D-ribosyl)imidazole-4-carboxylate from 5-amino-1-(5-phospho-D-ribosyl)imidazole (N5-CAIR route): step 1/2. Its function is as follows. Catalyzes the ATP-dependent conversion of 5-aminoimidazole ribonucleotide (AIR) and HCO(3)(-) to N5-carboxyaminoimidazole ribonucleotide (N5-CAIR). The chain is N5-carboxyaminoimidazole ribonucleotide synthase from Vibrio vulnificus (strain YJ016).